Consider the following 306-residue polypeptide: Protoheme IX farnesyltransferase (306 aa).

9 helical membrane-spanning segments follow: residues 32–52 (VVAL…PGAL), 58–78 (IPAM…NHIV), 103–123 (NAIV…YALV), 126–146 (LTAF…TMYL), 153–173 (NITI…TAMT), 180–200 (ALLL…ALAI), 227–247 (ILLY…VGMS), 249–269 (WLYL…AWQL), and 278–298 (AMAT…ILLL).

The protein belongs to the UbiA prenyltransferase family. Protoheme IX farnesyltransferase subfamily.

It is found in the cell inner membrane. The enzyme catalyses heme b + (2E,6E)-farnesyl diphosphate + H2O = Fe(II)-heme o + diphosphate. Its pathway is porphyrin-containing compound metabolism; heme O biosynthesis; heme O from protoheme: step 1/1. Functionally, converts heme B (protoheme IX) to heme O by substitution of the vinyl group on carbon 2 of heme B porphyrin ring with a hydroxyethyl farnesyl side group. The protein is Protoheme IX farnesyltransferase of Colwellia psychrerythraea (strain 34H / ATCC BAA-681) (Vibrio psychroerythus).